Consider the following 381-residue polypeptide: Putative MgpC-like protein MPN_503 (381 aa).

The tract at residues 1–109 is disordered; the sequence is MNGVAQDKVH…TDSQQSGHNS (109 aa). The span at 13-31 shows a compositional bias: polar residues; sequence EQTTQWNQQASQKNLTNNP. 2 stretches are compositionally biased toward basic and acidic residues: residues 40 to 51 and 61 to 73; these read KLDKGRAYRKLN and DSTK…DKDG. Over residues 89-109 the composition is skewed to polar residues; the sequence is VSSTESQMAAVTDSQQSGHNS.

This sequence belongs to the MgpC family.

The protein is Putative MgpC-like protein MPN_503 of Mycoplasma pneumoniae (strain ATCC 29342 / M129 / Subtype 1) (Mycoplasmoides pneumoniae).